Reading from the N-terminus, the 708-residue chain is DNA-directed RNA polymerase III subunit RPC5 (708 aa).

Residues 146-155 (DAKHREREAA) show a composition bias toward basic and acidic residues. The tract at residues 146–170 (DAKHREREAANEAGDSSQDEAEDDV) is disordered. 2 positions are modified to phosphoserine: S161 and S162. K171 participates in a covalent cross-link: Glycyl lysine isopeptide (Lys-Gly) (interchain with G-Cter in SUMO2). S192 is modified (phosphoserine). Position 224 is a phosphotyrosine (Y224). K432 is covalently cross-linked (Glycyl lysine isopeptide (Lys-Gly) (interchain with G-Cter in SUMO2)). Positions 485–552 (QLRVPAVPPG…DSFNGHPPQG (68 aa)) are disordered. K498 is covalently cross-linked (Glycyl lysine isopeptide (Lys-Gly) (interchain with G-Cter in SUMO1); alternate). K498 participates in a covalent cross-link: Glycyl lysine isopeptide (Lys-Gly) (interchain with G-Cter in SUMO2); alternate. Residues 502–519 (VSEEGEEDEEQEAEEEPM) are compositionally biased toward acidic residues. Phosphoserine is present on residues S503 and S522. The segment at 556–708 (TPVARELKAF…MWYLKGTVQS (153 aa)) is required for Pol III complex stability. Residue K659 forms a Glycyl lysine isopeptide (Lys-Gly) (interchain with G-Cter in SUMO2) linkage.

In terms of assembly, component of the RNA polymerase III complex consisting of at least 17 subunits: a ten-subunit horseshoe-shaped catalytic core composed of POLR3A/RPC1, POLR3B/RPC2, POLR1C/RPAC1, POLR1D/RPAC2, POLR3K/RPC10, POLR2E/RPABC1, POLR2F/RPABC2, POLR2H/RPABC3, POLR2K/RPABC4 and POLR2L/RPABC5; the stalk composed of two subunits POLR3H/RPC8 and CRCP/RPC9, forming a structural mobile part that protrudes out of the core and functions primarily in transcription initiation; and additional subunits homologous to general transcription factors of the RNA polymerase II machinery, POLR3D/RPC4-POLR3E/RPC5 heterodimer and POLR3/CRPC3-POLR3F/RPC6-POLR3G/RPC7 heterotrimer.

The protein localises to the nucleus. Functionally, DNA-dependent RNA polymerase catalyzes the transcription of DNA into RNA using the four ribonucleoside triphosphates as substrates. Specific peripheric component of RNA polymerase III (Pol III) which synthesizes small non-coding RNAs including 5S rRNA, snRNAs, tRNAs and miRNAs from at least 500 distinct genomic loci. Assembles with POLR3D/RPC4 forming a subcomplex that binds the Pol III core. Enables recruitment of Pol III at transcription initiation site and drives transcription initiation from both type 2 and type 3 DNA promoters. Required for efficient transcription termination and reinitiation. Plays a key role in sensing and limiting infection by intracellular bacteria and DNA viruses. Acts as a nuclear and cytosolic DNA sensor involved in innate immune response. Can sense non-self dsDNA that serves as template for transcription into dsRNA. The non-self RNA polymerase III transcripts, such as Epstein-Barr virus-encoded RNAs (EBERs) induce type I interferon and NF-kappa-B through the RIG-I pathway. The polypeptide is DNA-directed RNA polymerase III subunit RPC5 (Homo sapiens (Human)).